We begin with the raw amino-acid sequence, 966 residues long: Leucine--tRNA ligase (966 aa).

A 'HIGH' region motif is present at residues 41–51 (PYLNGNLHAGH). A 'KMSKS' region motif is present at residues 632 to 636 (KMSKS). Lys-635 is a binding site for ATP.

It belongs to the class-I aminoacyl-tRNA synthetase family.

Its subcellular location is the cytoplasm. The enzyme catalyses tRNA(Leu) + L-leucine + ATP = L-leucyl-tRNA(Leu) + AMP + diphosphate. This is Leucine--tRNA ligase from Methanosarcina mazei (strain ATCC BAA-159 / DSM 3647 / Goe1 / Go1 / JCM 11833 / OCM 88) (Methanosarcina frisia).